The following is a 228-amino-acid chain: L-ribulose-5-phosphate 4-epimerase UlaF (228 aa).

Residues 26–27 (GN), 43–44 (SG), and 72–73 (SS) contribute to the substrate site. Residues D74, H93, and H95 each contribute to the Zn(2+) site. The active-site Proton donor/acceptor is the D118. H167 contributes to the Zn(2+) binding site. The active-site Proton donor/acceptor is the Y225.

This sequence belongs to the aldolase class II family. AraD/FucA subfamily. Zn(2+) serves as cofactor.

It carries out the reaction L-ribulose 5-phosphate = D-xylulose 5-phosphate. The protein operates within cofactor degradation; L-ascorbate degradation; D-xylulose 5-phosphate from L-ascorbate: step 4/4. Catalyzes the isomerization of L-ribulose 5-phosphate to D-xylulose 5-phosphate. Is involved in the anaerobic L-ascorbate utilization. In Salmonella paratyphi B (strain ATCC BAA-1250 / SPB7), this protein is L-ribulose-5-phosphate 4-epimerase UlaF.